The primary structure comprises 103 residues: Small ribosomal subunit protein uS10 (103 aa).

It belongs to the universal ribosomal protein uS10 family. As to quaternary structure, part of the 30S ribosomal subunit.

Functionally, involved in the binding of tRNA to the ribosomes. The chain is Small ribosomal subunit protein uS10 from Azotobacter vinelandii (strain DJ / ATCC BAA-1303).